Consider the following 160-residue polypeptide: Nucleotide-binding protein Patl_4311 (160 aa).

It belongs to the YajQ family.

Its function is as follows. Nucleotide-binding protein. In Pseudoalteromonas atlantica (strain T6c / ATCC BAA-1087), this protein is Nucleotide-binding protein Patl_4311.